Consider the following 206-residue polypeptide: Pyridoxine/pyridoxamine 5'-phosphate oxidase (206 aa).

FMN-binding positions include 54–59, 69–70, R75, K76, and Q98; these read RVVLLK and YT. Residue K59 coordinates substrate. Y116, R120, and S124 together coordinate substrate. Residues 133-134 and W178 contribute to the FMN site; that span reads QS. 184–186 is a binding site for substrate; it reads RLH. R188 is an FMN binding site.

It belongs to the pyridoxamine 5'-phosphate oxidase family. As to quaternary structure, homodimer. The cofactor is FMN.

The catalysed reaction is pyridoxamine 5'-phosphate + O2 + H2O = pyridoxal 5'-phosphate + H2O2 + NH4(+). The enzyme catalyses pyridoxine 5'-phosphate + O2 = pyridoxal 5'-phosphate + H2O2. It functions in the pathway cofactor metabolism; pyridoxal 5'-phosphate salvage; pyridoxal 5'-phosphate from pyridoxamine 5'-phosphate: step 1/1. The protein operates within cofactor metabolism; pyridoxal 5'-phosphate salvage; pyridoxal 5'-phosphate from pyridoxine 5'-phosphate: step 1/1. Catalyzes the oxidation of either pyridoxine 5'-phosphate (PNP) or pyridoxamine 5'-phosphate (PMP) into pyridoxal 5'-phosphate (PLP). In Anaplasma phagocytophilum (strain HZ), this protein is Pyridoxine/pyridoxamine 5'-phosphate oxidase.